The sequence spans 428 residues: E3 ubiquitin-protein ligase RNF128 (428 aa).

An N-terminal signal peptide occupies residues 1-38 (MGPPLGAGVSCRGGCGSSRLLAWCFLLALSPQAPGSRG). 3 N-linked (GlcNAc...) asparagine glycosylation sites follow: Asn48, Asn59, and Asn101. One can recognise a PA domain in the interval 75–183 (SPLEPVAGVL…LKGTKILQSI (109 aa)). The helical transmembrane segment at 208-228 (IFFVSVSFFIITAATVGYFIF) threads the bilayer. The RING-type; atypical zinc finger occupies 277–318 (CAVCIELYKPNDLVRILTCNHIFHKTCVDPWLLEHRTCPMCK). The tract at residues 346–428 (ISNSASSHEE…QETAVREIKS (83 aa)) is disordered. A compositionally biased stretch (basic and acidic residues) spans 416–428 (TPHQETAVREIKS).

In terms of processing, auto-ubiquitinated. Controls the development of T-cell clonal anergy by ubiquitination.

It localises to the cytoplasm. It is found in the endomembrane system. The protein localises to the cytoskeleton. The protein resides in the perinuclear region. It catalyses the reaction S-ubiquitinyl-[E2 ubiquitin-conjugating enzyme]-L-cysteine + [acceptor protein]-L-lysine = [E2 ubiquitin-conjugating enzyme]-L-cysteine + N(6)-ubiquitinyl-[acceptor protein]-L-lysine.. It functions in the pathway protein modification; protein ubiquitination. Functionally, E3 ubiquitin-protein ligase that catalyzes 'Lys-27', 'Lys-48'- or 'Lys-63'-linked polyubiquitin chains formation and plays a role in different biological processes such as modulation of immune response, cytoskeletal dynamics or protein homeostasis. Inhibits IL2 and IL4 transcription, thereby playing an important role in the induction of the anergic phenotype, a long-term stable state of T-lymphocyte unresponsiveness to antigenic stimulation associated with the blockade of interleukin production. Ubiquitinates ARPC5 with 'Lys-48' linkages and COR1A with 'Lys-63' linkages leading to their degradation, down-regulation of these cytoskeletal components results in impaired lamellipodium formation and reduced accumulation of F-actin at the immunological synapse. Functions in the patterning of the dorsal ectoderm; sensitizes ectoderm to respond to neural-inducing signals. Plays a positive role in innate immune response by promoting 'Lys-63'-linked ubiquitination of TBK1 after RNA- or DNA-virus infection. Regulates alveolar macrophage activation and neutrophil infiltration by interacting with TLR4, targeting it for degradation, and inhibiting NF-kappa-B activation, hence decreasing pro-inflammatory cytokines. Negatively regulates the IL-3/STAT5 signaling pathway by facilitating 'Lys-27'-linked polyubiquitination of IL3RA leading to its degradation via lysosomal pathway. Directly regulates the N-glycosylation process in the endoplasmic reticulum by targeting the glycosyl-transferase RPN1 for ubiquitination and degradation. Other substrates targeted for degradation by RNF128 include transmembrane proteins CD40L, CD83 or the tetraspanin CD151. The protein is E3 ubiquitin-protein ligase RNF128 (RNF128) of Pongo abelii (Sumatran orangutan).